The chain runs to 128 residues: Glycine cleavage system H protein (128 aa).

Positions 23–105 constitute a Lipoyl-binding domain; it reads IGIVGITWFA…YGEGWILKLE (83 aa). Lysine 64 is modified (N6-lipoyllysine).

This sequence belongs to the GcvH family. As to quaternary structure, the glycine cleavage system is composed of four proteins: P, T, L and H. It depends on (R)-lipoate as a cofactor.

Functionally, the glycine cleavage system catalyzes the degradation of glycine. The H protein shuttles the methylamine group of glycine from the P protein to the T protein. The sequence is that of Glycine cleavage system H protein from Symbiobacterium thermophilum (strain DSM 24528 / JCM 14929 / IAM 14863 / T).